The chain runs to 221 residues: Probable septum site-determining protein MinC (221 aa).

It belongs to the MinC family. In terms of assembly, interacts with MinD and FtsZ.

Functionally, cell division inhibitor that blocks the formation of polar Z ring septums. Rapidly oscillates between the poles of the cell to destabilize FtsZ filaments that have formed before they mature into polar Z rings. Prevents FtsZ polymerization. The protein is Probable septum site-determining protein MinC of Shewanella sp. (strain MR-7).